Consider the following 203-residue polypeptide: Akirin-2 (203 aa).

2 positions are modified to phosphoserine: Ser-18 and Ser-21. The Nuclear localization signal signature appears at 22-27; that stretch reads PKRRRC. Ser-57 is subject to Phosphoserine. The SYVS motif signature appears at 200-203; the sequence is SYVS.

It belongs to the akirin family. Homodimer. Interacts with IPO9; the interaction is direct. Associates with 20S and 26S proteasomes. Interacts with SMARCD1; promoting SWI/SNF complex recruitment. Interacts with NFKBIZ. Interacts with YWHAB. Polyubiquitinated. Polyubiquitination is dependent of UBR5 that extends pre-ubiquitinated AKIRIN2. As to expression, widely expressed. Most abundant in the lung, followed by the skeletal muscle, heart, liver, fat, thymus, lymph node, small intestine, kidney and spleen. In skeletal muscle, expressed at higher level in fast extensor digitorum longus (EDL) and longissimus lumborum (LL) muscles than in slow soleus (SOL) muscles.

It localises to the nucleus. It is found in the cytoplasm. The protein localises to the membrane. In terms of biological role, molecular adapter that acts as a bridge between a variety of multiprotein complexes, and which is involved in embryonic development, immunity, myogenesis and brain development. Plays a key role in nuclear protein degradation by promoting import of proteasomes into the nucleus: directly binds to fully assembled 20S proteasomes at one end and to nuclear import receptor IPO9 at the other end, bridging them together and mediating the import of pre-assembled proteasome complexes through the nuclear pore. Involved in innate immunity by regulating the production of interleukin-6 (IL6) downstream of Toll-like receptor (TLR): acts by bridging the NF-kappa-B inhibitor NFKBIZ and the SWI/SNF complex, leading to promote induction of IL6. Also involved in adaptive immunity by promoting B-cell activation. Involved in brain development: required for the survival and proliferation of cerebral cortical progenitor cells. Involved in myogenesis: required for skeletal muscle formation and skeletal development, possibly by regulating expression of muscle differentiation factors. The polypeptide is Akirin-2 (Sus scrofa (Pig)).